The chain runs to 190 residues: RNA pyrophosphohydrolase (190 aa).

Positions 6-149 (GYRPNVGIVL…KRGVYARALC (144 aa)) constitute a Nudix hydrolase domain. The short motif at 38-59 (GGMHSDETPVEAMYRELNEEIG) is the Nudix box element.

The protein belongs to the Nudix hydrolase family. RppH subfamily. A divalent metal cation is required as a cofactor.

Accelerates the degradation of transcripts by removing pyrophosphate from the 5'-end of triphosphorylated RNA, leading to a more labile monophosphorylated state that can stimulate subsequent ribonuclease cleavage. The polypeptide is RNA pyrophosphohydrolase (Xylella fastidiosa (strain M12)).